The primary structure comprises 429 residues: Asparagine--tRNA ligase (429 aa).

This sequence belongs to the class-II aminoacyl-tRNA synthetase family. In terms of assembly, homodimer.

The protein resides in the cytoplasm. The enzyme catalyses tRNA(Asn) + L-asparagine + ATP = L-asparaginyl-tRNA(Asn) + AMP + diphosphate + H(+). This chain is Asparagine--tRNA ligase, found in Desulforamulus reducens (strain ATCC BAA-1160 / DSM 100696 / MI-1) (Desulfotomaculum reducens).